Reading from the N-terminus, the 100-residue chain is Urease subunit gamma (100 aa).

This sequence belongs to the urease gamma subunit family. Heterotrimer of UreA (gamma), UreB (beta) and UreC (alpha) subunits. Three heterotrimers associate to form the active enzyme.

Its subcellular location is the cytoplasm. The catalysed reaction is urea + 2 H2O + H(+) = hydrogencarbonate + 2 NH4(+). Its pathway is nitrogen metabolism; urea degradation; CO(2) and NH(3) from urea (urease route): step 1/1. This chain is Urease subunit gamma, found in Actinobacillus pleuropneumoniae serotype 5b (strain L20).